A 257-amino-acid polypeptide reads, in one-letter code: Imidazole glycerol phosphate synthase subunit HisF (257 aa).

Residues Asp-12 and Asp-131 contribute to the active site.

The protein belongs to the HisA/HisF family. Heterodimer of HisH and HisF.

It is found in the cytoplasm. It catalyses the reaction 5-[(5-phospho-1-deoxy-D-ribulos-1-ylimino)methylamino]-1-(5-phospho-beta-D-ribosyl)imidazole-4-carboxamide + L-glutamine = D-erythro-1-(imidazol-4-yl)glycerol 3-phosphate + 5-amino-1-(5-phospho-beta-D-ribosyl)imidazole-4-carboxamide + L-glutamate + H(+). The protein operates within amino-acid biosynthesis; L-histidine biosynthesis; L-histidine from 5-phospho-alpha-D-ribose 1-diphosphate: step 5/9. IGPS catalyzes the conversion of PRFAR and glutamine to IGP, AICAR and glutamate. The HisF subunit catalyzes the cyclization activity that produces IGP and AICAR from PRFAR using the ammonia provided by the HisH subunit. This chain is Imidazole glycerol phosphate synthase subunit HisF, found in Burkholderia multivorans (strain ATCC 17616 / 249).